Here is a 433-residue protein sequence, read N- to C-terminus: Histidine--tRNA ligase (433 aa).

The protein belongs to the class-II aminoacyl-tRNA synthetase family. Homodimer.

It is found in the cytoplasm. The catalysed reaction is tRNA(His) + L-histidine + ATP = L-histidyl-tRNA(His) + AMP + diphosphate + H(+). In Crocosphaera subtropica (strain ATCC 51142 / BH68) (Cyanothece sp. (strain ATCC 51142)), this protein is Histidine--tRNA ligase.